Here is a 602-residue protein sequence, read N- to C-terminus: MENRASGTTSNGETKPVCPAMEKVEEDGTLEREHWNNKMEFVLSVAGEIIGLGNVWRFPYLCYKNGGGAFFIPYLIFLFTCGIPVFFLETALGQYTNQGGITAWRRICPIFEGIGYASQMIVSLLNVYYIVVLAWALFYLFSSFTTDLPWGSCSHEWNTENCVEFQKANDSMNVTSENATSPVIEFWERRVLKLSDGIQHLGSLRWELVLCLLLAWIICYFCIWKGVKSTGKVVYFTATFPYLMLVVLLIRGVTLPGAAQGIQFYLYPNITRLWDPQVWMDAGTQIFFSFAICLGCLTALGSYNKYHNNCYRDCIALCILNSSTSFMAGFAIFSILGFMSQEQGVPISEVAESGPGLAFIAYPRAVVMLPFSPLWACCFFFMVVLLGLDSQFVCVESLVTALVDMYPRVFRKKNRREVLILIVSVISFFIGLIMLTEGGMYVFQLFDYYAASGMCLLFVAIFESLCVAWVYGAGRFYDNIEDMIGYKPWPLIKYCWLFFTPAVCLATFLFSLIKYTPLTYNKKYTYPWWGDALGWLLALSSMICIPAWSIYKLRTLKGPLRERLRQLVCPAEDLPQKNQPEPTAPATPMTSLLRLTELESNC.

The Cytoplasmic segment spans residues 1–40 (MENRASGTTSNGETKPVCPAMEKVEEDGTLEREHWNNKME). 3 consecutive transmembrane segments (helical) span residues 41–61 (FVLS…FPYL), 68–88 (GAFF…VFFL), and 121–141 (IVSL…FYLF). The Extracellular portion of the chain corresponds to 142–206 (SSFTTDLPWG…GIQHLGSLRW (65 aa)). Cys153 and Cys162 are oxidised to a cystine. Asn169, Asn173, and Asn178 each carry an N-linked (GlcNAc...) asparagine glycan. 2 helical membrane-spanning segments follow: residues 207–227 (ELVL…WKGV) and 233–253 (VVYF…IRGV). Asn269 carries an N-linked (GlcNAc...) asparagine glycan. 7 helical membrane-spanning segments follow: residues 282–302 (AGTQ…ALGS), 319–339 (ILNS…LGFM), 366–386 (VVML…VVLL), 418–438 (VLIL…LTEG), 453–473 (GMCL…VYGA), 490–510 (PLIK…TFLF), and 528–548 (WWGD…IPAW). Over 549-602 (SIYKLRTLKGPLRERLRQLVCPAEDLPQKNQPEPTAPATPMTSLLRLTELESNC) the chain is Cytoplasmic. Thr587 is modified (phosphothreonine). At Ser591 the chain carries Phosphoserine.

This sequence belongs to the sodium:neurotransmitter symporter (SNF) (TC 2.A.22) family. SLC6A13 subfamily. In terms of tissue distribution, expressed at high levels in liver, followed by kidney and leptomeninges, and very low levels in the cerebellum (at protein level). In the brain, detected in some blood vessels (at protein level). In the kidney, expressed in the cortex, including parts of the proximal tubules, but not in the medulla (at protein level). In the liver, highest expression in periportal hepatocytes, with highest density at the vascular side (at protein level). Also detected at low levels in other organs, including skeletal muscle.

It localises to the cell membrane. Its subcellular location is the basolateral cell membrane. It carries out the reaction 4-aminobutanoate(out) + chloride(out) + 2 Na(+)(out) = 4-aminobutanoate(in) + chloride(in) + 2 Na(+)(in). The enzyme catalyses taurine(out) + chloride(out) + 2 Na(+)(out) = taurine(in) + chloride(in) + 2 Na(+)(in). The catalysed reaction is beta-alanine(out) + chloride(out) + 2 Na(+)(out) = beta-alanine(in) + chloride(in) + 2 Na(+)(in). It catalyses the reaction hypotaurine(out) + chloride(out) + 2 Na(+)(out) = hypotaurine(in) + chloride(in) + 2 Na(+)(in). Gamma-aminobutyric acid (GABA) transport is inhibited by beta-alanine, taurine, hypotaurine, beta-guanidinopropionic acid, 2,3-diaminopropionic acid, guvacine and nipecotic acid. Beta-alanine transport is inhibited by GABA. Taurine transport is inhibited by GABA, beta-alanine, SNAP-5114, nigericin, nipecotic acid and ouabain. Mediates sodium- and chloride-dependent transport of gamma-aminobutyric acid (GABA). Can also mediate transport of beta-alanine, taurine and hypotaurine and is the major taurine transporter in hepatocytes. This chain is Sodium- and chloride-dependent GABA transporter 2 (Slc6a13), found in Mus musculus (Mouse).